A 67-amino-acid polypeptide reads, in one-letter code: Kappa-conotoxin-like Em11.8 (67 aa).

The N-terminal stretch at 1 to 26 (MMFRLTSVSCFLLVIACLNLFQVVLT) is a signal peptide. Cystine bridges form between cysteine 29-cysteine 43, cysteine 36-cysteine 48, cysteine 42-cysteine 51, and cysteine 47-cysteine 55. The residue at position 59 (phenylalanine 59) is a Phenylalanine amide. Residues 63–67 (ATFQE) constitute a propeptide that is removed on maturation.

Belongs to the conotoxin I2 superfamily. Expressed by the venom duct.

It is found in the secreted. In terms of biological role, inhibits the vertebrate voltage-gated potassium channels Kv1.1/KCNA1 and Kv1.3/KCNA3. The chain is Kappa-conotoxin-like Em11.8 from Conus emaciatus (False virgin cone).